We begin with the raw amino-acid sequence, 2164 residues long: Hemagglutinin A (2164 aa).

The first 25 residues, 1 to 25, serve as a signal peptide directing secretion; sequence MRKLNSLFSLAVLLSLLCWGQTAAA. Peptidase C25-like stretches follow at residues 26–539, 540–991, and 992–1443; these read QGGP…TPPP, GGSS…TPPP, and GGTS…TPPP. Disordered regions lie at residues 493–512 and 520–541; these read WDAPNGTPNPNPGTTTLSES and SWKTIDADGDGNNWTTTPPPGG. Over residues 496–508 the composition is skewed to low complexity; the sequence is PNGTPNPNPGTTT.

The protein belongs to the peptidase C25 family.

Functionally, agglutinates erythrocytes. The polypeptide is Hemagglutinin A (hagA) (Porphyromonas gingivalis (strain ATCC BAA-308 / W83)).